The sequence spans 56 residues: Small ribosomal subunit protein uS14 (56 aa).

Zn(2+)-binding residues include Cys21, Cys24, Cys39, and Cys42.

It belongs to the universal ribosomal protein uS14 family. Zn(2+) is required as a cofactor.

In Eremothecium gossypii (strain ATCC 10895 / CBS 109.51 / FGSC 9923 / NRRL Y-1056) (Yeast), this protein is Small ribosomal subunit protein uS14 (RPS29).